Here is a 172-residue protein sequence, read N- to C-terminus: Large ribosomal subunit protein uL10 (172 aa).

The protein belongs to the universal ribosomal protein uL10 family. In terms of assembly, part of the ribosomal stalk of the 50S ribosomal subunit. The N-terminus interacts with L11 and the large rRNA to form the base of the stalk. The C-terminus forms an elongated spine to which L12 dimers bind in a sequential fashion forming a multimeric L10(L12)X complex.

Functionally, forms part of the ribosomal stalk, playing a central role in the interaction of the ribosome with GTP-bound translation factors. This Bartonella tribocorum (strain CIP 105476 / IBS 506) protein is Large ribosomal subunit protein uL10.